The primary structure comprises 309 residues: Ribonuclease Z (309 aa).

Positions 63, 65, 67, 68, 145, 216, and 274 each coordinate Zn(2+). Catalysis depends on D67, which acts as the Proton acceptor.

It belongs to the RNase Z family. Homodimer. Zn(2+) is required as a cofactor.

The enzyme catalyses Endonucleolytic cleavage of RNA, removing extra 3' nucleotides from tRNA precursor, generating 3' termini of tRNAs. A 3'-hydroxy group is left at the tRNA terminus and a 5'-phosphoryl group is left at the trailer molecule.. In terms of biological role, zinc phosphodiesterase, which displays some tRNA 3'-processing endonuclease activity. Probably involved in tRNA maturation, by removing a 3'-trailer from precursor tRNA. The chain is Ribonuclease Z from Streptococcus pyogenes serotype M6 (strain ATCC BAA-946 / MGAS10394).